We begin with the raw amino-acid sequence, 816 residues long: Phosphatidylinositol 4-kinase beta (816 aa).

Disordered stretches follow at residues 1–29 (MGDM…GGSL), 99–121 (EEED…RRRQ), and 250–318 (RKRE…SFSS). Residue G2 is modified to N-acetylglycine. The interaction with ACBD3 stretch occupies residues 2–68 (GDMVVEPATL…VKLLHGGVAI (67 aa)). The span at 10-29 (TLKPTSEPTPSPSGNNGGSL) shows a compositional bias: low complexity. A PIK helical domain is found at 61–242 (LLHGGVAISS…GTKLRKLILS (182 aa)). S258 carries the post-translational modification Phosphoserine. T263 bears the Phosphothreonine mark. Residues S266, S275, S277, S284, and S294 each carry the phosphoserine modification. 2 stretches are compositionally biased toward polar residues: residues 278–297 (DATA…SNPK) and 306–318 (SSST…SFSS). S428 carries the phosphoserine modification. T438 bears the Phosphothreonine mark. S511 carries the post-translational modification Phosphoserine. Phosphothreonine is present on residues T517 and T519. The PI3K/PI4K catalytic domain occupies 535-801 (EPWQEKVRRI…MVDGSMRSIT (267 aa)). The interval 541-547 (VRRIREG) is G-loop. Positions 668–676 (QVKDRHNGN) are catalytic loop. The activation loop stretch occupies residues 687-711 (HIDFGFILSSSPRNLGFETSAFKLT).

Belongs to the PI3/PI4-kinase family. Type III PI4K subfamily. In terms of assembly, interacts with ARF1 and ARF3 in the Golgi complex, but not with ARF4, ARF5 or ARF6. Interacts with NCS1/FREQ in a calcium-independent manner. Interacts with CALN1/CABP8 and CALN2/CABP7; in a calcium-dependent manner; this interaction competes with NCS1/FREQ binding. Interacts with ACBD3. Interacts with ARMH3, YWHAB, YWHAE, YWHAG, YWHAH, YWHAQ, YWHAZ and SFN. Interacts with GGA2 (via VHS domain); the interaction is important for PI4KB location at the Golgi apparatus membrane. Interacts with ATG9A. Mg(2+) serves as cofactor. The cofactor is Mn(2+). In terms of tissue distribution, strongly expressed in brain, kidney, lung, small intestine, uterus and adrenal gland. Weaker expression in liver, heart, skeletal muscle, thymus and testis. Not detected in spleen.

The protein localises to the golgi apparatus. It is found in the endomembrane system. The protein resides in the mitochondrion outer membrane. It localises to the rough endoplasmic reticulum membrane. Its subcellular location is the golgi apparatus membrane. The catalysed reaction is a 1,2-diacyl-sn-glycero-3-phospho-(1D-myo-inositol) + ATP = a 1,2-diacyl-sn-glycero-3-phospho-(1D-myo-inositol 4-phosphate) + ADP + H(+). Its activity is regulated as follows. Inhibited by wortmannin. Increased kinase activity upon interaction with NCS1/FREQ. In terms of biological role, phosphorylates phosphatidylinositol (PI) in the first committed step in the production of the second messenger inositol-1,4,5,-trisphosphate (PIP). May regulate Golgi disintegration/reorganization during mitosis, possibly via its phosphorylation. Involved in Golgi-to-plasma membrane trafficking. May play an important role in the inner ear development. The sequence is that of Phosphatidylinositol 4-kinase beta (Pi4kb) from Rattus norvegicus (Rat).